A 244-amino-acid polypeptide reads, in one-letter code: Glucosamine-6-phosphate deaminase (244 aa).

Catalysis depends on aspartate 67, which acts as the Proton acceptor; for enolization step. The active-site For ring-opening step is asparagine 136. Histidine 138 (proton acceptor; for ring-opening step) is an active-site residue. The For ring-opening step role is filled by glutamate 143.

The protein belongs to the glucosamine/galactosamine-6-phosphate isomerase family. NagB subfamily.

The catalysed reaction is alpha-D-glucosamine 6-phosphate + H2O = beta-D-fructose 6-phosphate + NH4(+). The protein operates within amino-sugar metabolism; N-acetylneuraminate degradation; D-fructose 6-phosphate from N-acetylneuraminate: step 5/5. In terms of biological role, catalyzes the reversible isomerization-deamination of glucosamine 6-phosphate (GlcN6P) to form fructose 6-phosphate (Fru6P) and ammonium ion. This is Glucosamine-6-phosphate deaminase from Clostridium botulinum (strain Loch Maree / Type A3).